The primary structure comprises 242 residues: Ditrans,polycis-undecaprenyl-diphosphate synthase ((2E,6E)-farnesyl-diphosphate specific) (242 aa).

The active site involves Asp21. Asp21 is a Mg(2+) binding site. Residues Gly22–Arg25, Trp26, Arg34, His38, and Ser66–Glu68 contribute to the substrate site. Residue Asn69 is the Proton acceptor of the active site. Substrate is bound by residues Trp70, Arg72, Arg189, and Arg195–Ser197. Glu208 provides a ligand contact to Mg(2+).

The protein belongs to the UPP synthase family. Homodimer. It depends on Mg(2+) as a cofactor.

The catalysed reaction is 8 isopentenyl diphosphate + (2E,6E)-farnesyl diphosphate = di-trans,octa-cis-undecaprenyl diphosphate + 8 diphosphate. Its function is as follows. Catalyzes the sequential condensation of isopentenyl diphosphate (IPP) with (2E,6E)-farnesyl diphosphate (E,E-FPP) to yield (2Z,6Z,10Z,14Z,18Z,22Z,26Z,30Z,34E,38E)-undecaprenyl diphosphate (di-trans,octa-cis-UPP). UPP is the precursor of glycosyl carrier lipid in the biosynthesis of bacterial cell wall polysaccharide components such as peptidoglycan and lipopolysaccharide. This is Ditrans,polycis-undecaprenyl-diphosphate synthase ((2E,6E)-farnesyl-diphosphate specific) from Haemophilus ducreyi (strain 35000HP / ATCC 700724).